Consider the following 290-residue polypeptide: Bifunctional protein FolD (290 aa).

Residues 164 to 166 (GRS), Ser193, and Ile234 each bind NADP(+).

This sequence belongs to the tetrahydrofolate dehydrogenase/cyclohydrolase family. As to quaternary structure, homodimer.

The catalysed reaction is (6R)-5,10-methylene-5,6,7,8-tetrahydrofolate + NADP(+) = (6R)-5,10-methenyltetrahydrofolate + NADPH. It carries out the reaction (6R)-5,10-methenyltetrahydrofolate + H2O = (6R)-10-formyltetrahydrofolate + H(+). The protein operates within one-carbon metabolism; tetrahydrofolate interconversion. In terms of biological role, catalyzes the oxidation of 5,10-methylenetetrahydrofolate to 5,10-methenyltetrahydrofolate and then the hydrolysis of 5,10-methenyltetrahydrofolate to 10-formyltetrahydrofolate. The protein is Bifunctional protein FolD of Cytophaga hutchinsonii (strain ATCC 33406 / DSM 1761 / CIP 103989 / NBRC 15051 / NCIMB 9469 / D465).